We begin with the raw amino-acid sequence, 75 residues long: Antimicrobial peptide Meucin-49-1 (75 aa).

An N-terminal signal peptide occupies residues 1-22 (MNKKILLVIFIVTMLIVDEVNS).

It belongs to the non-disulfide-bridged peptide (NDBP) superfamily. Long chain multifunctional peptide (group 2) family. In terms of tissue distribution, expressed by the venom gland.

The protein localises to the secreted. Functionally, antimicrobial peptide. This is Antimicrobial peptide Meucin-49-1 from Mesobuthus eupeus (Lesser Asian scorpion).